The sequence spans 309 residues: Taste receptor type 2 member 105 (309 aa).

Topologically, residues 1 to 9 are extracellular; that stretch reads MLSAAEGIL. The chain crosses the membrane as a helical span at residues 10–32; that stretch reads LSIATVEAGLGVLGNTFIALVNC. Residues 33-44 lie on the Cytoplasmic side of the membrane; that stretch reads MDWAKNKKLSKI. The chain crosses the membrane as a helical span at residues 45-67; the sequence is GFLLFGLATSRIFIVWILILDAY. Residues 68–86 are Extracellular-facing; sequence AKLFFPGKYLSKSLTEIIS. A helical membrane pass occupies residues 87-109; it reads CIWMTVNHMTVWFATSLSIFYFL. Topologically, residues 110-129 are cytoplasmic; sequence KIANFSHYIFLWLKRRTDKV. Residues 130-149 form a helical membrane-spanning segment; that stretch reads FAFLLWCLLISWAISFSFTV. The Extracellular segment spans residues 150–177; it reads KVMKSNPKNHGNRTSGTHWEKREFTSNY. An N-linked (GlcNAc...) asparagine glycan is attached at Asn161. Residues 178–200 form a helical membrane-spanning segment; the sequence is VLINIGVISLLIMTLTACFLLII. Residues 201 to 226 are Cytoplasmic-facing; the sequence is SLWKHSRQMQSNVSGFRDLNTEAHVK. Residues 227-249 form a helical membrane-spanning segment; sequence AIKFLISFIILFILYFIGVAVEI. Over 250–258 the chain is Extracellular; that stretch reads ICMFIPENK. Residues 259 to 281 traverse the membrane as a helical segment; the sequence is LLFIFGLTTASVYPCCHSVILIL. The Cytoplasmic segment spans residues 282-309; sequence TNSQLKQAFVKVLEGLKFSENGKDLRAT.

This sequence belongs to the G-protein coupled receptor T2R family. As to expression, expressed in subsets of taste receptor cells of the tongue and palate epithelium and exclusively in gustducin-positive cells. Expressed in 15% taste bud cells in circumvallate and foliate papillae but only in 2% in fungiform papillae. Expressed in the duodenum, antrum and fundus (part of the stomach).

Its subcellular location is the membrane. Gustducin-coupled cycloheximide receptor implicated in the perception of bitter compounds in the oral cavity and the gastrointestinal tract. Signals through PLCB2 and the calcium-regulated cation channel TRPM5. In Rattus norvegicus (Rat), this protein is Taste receptor type 2 member 105 (Tas2r105).